A 241-amino-acid polypeptide reads, in one-letter code: 2,3,4,5-tetrahydropyridine-2,6-dicarboxylate N-acetyltransferase (241 aa).

It belongs to the transferase hexapeptide repeat family. DapH subfamily.

It catalyses the reaction (S)-2,3,4,5-tetrahydrodipicolinate + acetyl-CoA + H2O = L-2-acetamido-6-oxoheptanedioate + CoA. The protein operates within amino-acid biosynthesis; L-lysine biosynthesis via DAP pathway; LL-2,6-diaminopimelate from (S)-tetrahydrodipicolinate (acetylase route): step 1/3. Functionally, catalyzes the transfer of an acetyl group from acetyl-CoA to tetrahydrodipicolinate. The sequence is that of 2,3,4,5-tetrahydropyridine-2,6-dicarboxylate N-acetyltransferase from Thermoanaerobacter sp. (strain X514).